The chain runs to 184 residues: NADH-quinone oxidoreductase subunit B 1 (184 aa).

Residues Cys37, Cys38, Cys103, and Cys132 each coordinate [4Fe-4S] cluster.

It belongs to the complex I 20 kDa subunit family. NDH-1 is composed of 14 different subunits. Subunits NuoB, C, D, E, F, and G constitute the peripheral sector of the complex. [4Fe-4S] cluster is required as a cofactor.

Its subcellular location is the cell membrane. It carries out the reaction a quinone + NADH + 5 H(+)(in) = a quinol + NAD(+) + 4 H(+)(out). NDH-1 shuttles electrons from NADH, via FMN and iron-sulfur (Fe-S) centers, to quinones in the respiratory chain. The immediate electron acceptor for the enzyme in this species is believed to be a menaquinone. Couples the redox reaction to proton translocation (for every two electrons transferred, four hydrogen ions are translocated across the cytoplasmic membrane), and thus conserves the redox energy in a proton gradient. The chain is NADH-quinone oxidoreductase subunit B 1 from Streptomyces coelicolor (strain ATCC BAA-471 / A3(2) / M145).